The chain runs to 289 residues: Diaminopimelate epimerase (289 aa).

N11 and N78 together coordinate substrate. C87 serves as the catalytic Proton donor. Substrate is bound by residues 88–89 (GN), N163, N199, and 217–218 (ER). The active-site Proton acceptor is the C226. 227–228 (GT) contacts substrate.

Belongs to the diaminopimelate epimerase family. Homodimer.

It is found in the cytoplasm. The enzyme catalyses (2S,6S)-2,6-diaminopimelate = meso-2,6-diaminopimelate. It functions in the pathway amino-acid biosynthesis; L-lysine biosynthesis via DAP pathway; DL-2,6-diaminopimelate from LL-2,6-diaminopimelate: step 1/1. In terms of biological role, catalyzes the stereoinversion of LL-2,6-diaminopimelate (L,L-DAP) to meso-diaminopimelate (meso-DAP), a precursor of L-lysine and an essential component of the bacterial peptidoglycan. The chain is Diaminopimelate epimerase from Mycolicibacterium vanbaalenii (strain DSM 7251 / JCM 13017 / BCRC 16820 / KCTC 9966 / NRRL B-24157 / PYR-1) (Mycobacterium vanbaalenii).